Consider the following 421-residue polypeptide: NADH-quinone oxidoreductase subunit F (421 aa).

Positions 1–25 (MLKEEDKIFTNLHGQQSHDLKSSKK) are disordered. Residues 16-25 (QSHDLKSSKK) are compositionally biased toward basic and acidic residues. 54–63 (GRGGAGFSTG) lines the NAD(+) pocket. Position 166-213 (166-213 (GAGAYICGEETALLESLEGKKGMPRLKPPFPAGFGLYGCPTTINNVES)) interacts with FMN. [4Fe-4S] cluster contacts are provided by Cys-344, Cys-347, Cys-350, and Cys-390.

This sequence belongs to the complex I 51 kDa subunit family. The cofactor is FMN. Requires [4Fe-4S] cluster as cofactor.

It catalyses the reaction a quinone + NADH + 5 H(+)(in) = a quinol + NAD(+) + 4 H(+)(out). NDH-1 shuttles electrons from NADH, via FMN and iron-sulfur (Fe-S) centers, to quinones in the respiratory chain. Couples the redox reaction to proton translocation (for every two electrons transferred, four hydrogen ions are translocated across the cytoplasmic membrane), and thus conserves the redox energy in a proton gradient. This chain is NADH-quinone oxidoreductase subunit F (nuoF), found in Rickettsia massiliae (strain Mtu5).